Reading from the N-terminus, the 230-residue chain is 2,3-bisphosphoglycerate-dependent phosphoglycerate mutase 2 (230 aa).

Residues 8–15 (RHGQSEWN), 21–22 (TG), Arg60, 87–90 (ERHY), Lys98, 114–115 (RR), and 183–184 (GN) each bind substrate. The active-site Tele-phosphohistidine intermediate is the His9. The active-site Proton donor/acceptor is the Glu87.

Belongs to the phosphoglycerate mutase family. BPG-dependent PGAM subfamily.

It catalyses the reaction (2R)-2-phosphoglycerate = (2R)-3-phosphoglycerate. It participates in carbohydrate degradation; glycolysis; pyruvate from D-glyceraldehyde 3-phosphate: step 3/5. In terms of biological role, catalyzes the interconversion of 2-phosphoglycerate and 3-phosphoglycerate. The sequence is that of 2,3-bisphosphoglycerate-dependent phosphoglycerate mutase 2 from Lactiplantibacillus plantarum (strain ATCC BAA-793 / NCIMB 8826 / WCFS1) (Lactobacillus plantarum).